Reading from the N-terminus, the 494-residue chain is Probable malate:quinone oxidoreductase (494 aa).

This sequence belongs to the MQO family. FAD is required as a cofactor.

It catalyses the reaction (S)-malate + a quinone = a quinol + oxaloacetate. Its pathway is carbohydrate metabolism; tricarboxylic acid cycle; oxaloacetate from (S)-malate (quinone route): step 1/1. The protein is Probable malate:quinone oxidoreductase of Micrococcus luteus (strain ATCC 4698 / DSM 20030 / JCM 1464 / CCM 169 / CCUG 5858 / IAM 1056 / NBRC 3333 / NCIMB 9278 / NCTC 2665 / VKM Ac-2230) (Micrococcus lysodeikticus).